Reading from the N-terminus, the 80-residue chain is Cell division activator CedA (80 aa).

The protein belongs to the CedA family.

Activates the cell division inhibited by chromosomal DNA over-replication. This chain is Cell division activator CedA, found in Citrobacter koseri (strain ATCC BAA-895 / CDC 4225-83 / SGSC4696).